The chain runs to 364 residues: Dihydroorotate dehydrogenase (quinone) (364 aa).

Residues 61–65 and threonine 85 contribute to the FMN site; that span reads AGFDK. A substrate-binding site is contributed by lysine 65. 110–114 is a binding site for substrate; the sequence is NRMGF. Asparagine 139 and asparagine 170 together coordinate FMN. Position 170 (asparagine 170) interacts with substrate. Serine 173 functions as the Nucleophile in the catalytic mechanism. Asparagine 175 lines the substrate pocket. FMN is bound by residues lysine 214 and alanine 242. Substrate is bound at residue 243 to 244; it reads NT. Residues glycine 266, glycine 295, and 316-317 contribute to the FMN site; that span reads YS.

This sequence belongs to the dihydroorotate dehydrogenase family. Type 2 subfamily. Monomer. The cofactor is FMN.

It localises to the cell membrane. It catalyses the reaction (S)-dihydroorotate + a quinone = orotate + a quinol. It participates in pyrimidine metabolism; UMP biosynthesis via de novo pathway; orotate from (S)-dihydroorotate (quinone route): step 1/1. Catalyzes the conversion of dihydroorotate to orotate with quinone as electron acceptor. The polypeptide is Dihydroorotate dehydrogenase (quinone) (Rhodopseudomonas palustris (strain BisA53)).